We begin with the raw amino-acid sequence, 473 residues long: Bifunctional protein HldE (473 aa).

The segment at 1-317 (MKLSMPRFDQ…RRAIQREEGS (317 aa)) is ribokinase. 194 to 197 (NLSE) contributes to the ATP binding site. Aspartate 263 is an active-site residue. The cytidylyltransferase stretch occupies residues 343–473 (FTNGCFDILH…TAIVEKIRKN (131 aa)).

It in the N-terminal section; belongs to the carbohydrate kinase PfkB family. In the C-terminal section; belongs to the cytidylyltransferase family. As to quaternary structure, homodimer.

The enzyme catalyses D-glycero-beta-D-manno-heptose 7-phosphate + ATP = D-glycero-beta-D-manno-heptose 1,7-bisphosphate + ADP + H(+). The catalysed reaction is D-glycero-beta-D-manno-heptose 1-phosphate + ATP + H(+) = ADP-D-glycero-beta-D-manno-heptose + diphosphate. It functions in the pathway nucleotide-sugar biosynthesis; ADP-L-glycero-beta-D-manno-heptose biosynthesis; ADP-L-glycero-beta-D-manno-heptose from D-glycero-beta-D-manno-heptose 7-phosphate: step 1/4. Its pathway is nucleotide-sugar biosynthesis; ADP-L-glycero-beta-D-manno-heptose biosynthesis; ADP-L-glycero-beta-D-manno-heptose from D-glycero-beta-D-manno-heptose 7-phosphate: step 3/4. Catalyzes the phosphorylation of D-glycero-D-manno-heptose 7-phosphate at the C-1 position to selectively form D-glycero-beta-D-manno-heptose-1,7-bisphosphate. Its function is as follows. Catalyzes the ADP transfer from ATP to D-glycero-beta-D-manno-heptose 1-phosphate, yielding ADP-D-glycero-beta-D-manno-heptose. This is Bifunctional protein HldE from Pseudomonas putida (strain W619).